The following is a 1058-amino-acid chain: SIT4-associating protein SAP185 (1058 aa).

Lysine 20 is covalently cross-linked (Glycyl lysine isopeptide (Lys-Gly) (interchain with G-Cter in ubiquitin)). Disordered stretches follow at residues threonine 34–glutamate 71, serine 135–glutamate 202, asparagine 513–aspartate 556, cysteine 818–glutamine 862, threonine 873–glutamate 892, and glutamate 934–aspartate 992. The span at aspartate 42 to phenylalanine 55 shows a compositional bias: polar residues. 2 stretches are compositionally biased toward basic and acidic residues: residues serine 135–lysine 146 and glutamate 153–glycine 175. The span at glutamate 176–serine 189 shows a compositional bias: acidic residues. A compositionally biased stretch (basic and acidic residues) spans glutamate 190 to glutamate 202. Composition is skewed to acidic residues over residues glutamate 528–asparagine 546 and glutamate 820–proline 837. The segment covering glutamine 838–glutamate 861 has biased composition (basic and acidic residues). Residues glutamate 934–phenylalanine 963 are compositionally biased toward polar residues. Residues phenylalanine 967 to tyrosine 991 are compositionally biased toward basic and acidic residues.

The protein belongs to the SAPS family. Post-translationally, hyperphosphorylated in the absence of SIT4.

Its function is as follows. Associates with the SIT4 phosphatase in a cell cycle dependent manner. May be directly or indirectly involved in SIT4-dependent functions in budding and in normal G1 cyclin expression. This is SIT4-associating protein SAP185 (SAP185) from Saccharomyces cerevisiae (strain ATCC 204508 / S288c) (Baker's yeast).